A 237-amino-acid chain; its full sequence is MAPEDTYPELQEEEIDVEAELEKLILEDSEAEAGTSSGETAAEPSPDPGEALKQLQHELEVVRQQLKEKEDAYLRLYADFENYRRRTQREKEEFSQKERQKFVLEILPVVDSFERAQQQLKLETDRERELHNSYQSVYRLLVECLKKMGVSRMKSVGQPFDPNLHEAIARQPSPDYPEDVVAVEYQPGYKLGDLVIRHAMVAVSAGSPSSEPSPPAQATIEAGPENTPASPQNPQPS.

2 disordered regions span residues 24–56 and 204–237; these read LILE…KQLQ and SAGS…PQPS.

The protein belongs to the GrpE family. Homodimer.

It localises to the cytoplasm. Its function is as follows. Participates actively in the response to hyperosmotic and heat shock by preventing the aggregation of stress-denatured proteins, in association with DnaK and GrpE. It is the nucleotide exchange factor for DnaK and may function as a thermosensor. Unfolded proteins bind initially to DnaJ; upon interaction with the DnaJ-bound protein, DnaK hydrolyzes its bound ATP, resulting in the formation of a stable complex. GrpE releases ADP from DnaK; ATP binding to DnaK triggers the release of the substrate protein, thus completing the reaction cycle. Several rounds of ATP-dependent interactions between DnaJ, DnaK and GrpE are required for fully efficient folding. This chain is Protein GrpE, found in Synechococcus sp. (strain JA-2-3B'a(2-13)) (Cyanobacteria bacterium Yellowstone B-Prime).